We begin with the raw amino-acid sequence, 20 residues long: Elongation factor Tu (20 aa).

Belongs to the GTP-binding elongation factor family. EF-Tu/EF-1A subfamily. As to quaternary structure, monomer.

The protein localises to the cytoplasm. Functionally, this protein promotes the GTP-dependent binding of aminoacyl-tRNA to the A-site of ribosomes during protein biosynthesis. This Mycoplasmopsis synoviae (Mycoplasma synoviae) protein is Elongation factor Tu (tuf).